We begin with the raw amino-acid sequence, 627 residues long: (-)-beta-pinene synthase 2, chloroplastic (627 aa).

The transit peptide at 1–51 (MDLISVLPSASKSCVCLHKPLSSSTHKLKPFCRKIRILGMPRPRKSVLMVS) directs the protein to the chloroplast. Positions 378, 382, and 530 each coordinate Mg(2+). Positions 378–382 (DDMYD) match the DDXXD motif motif.

The protein belongs to the terpene synthase family. Tpsd subfamily. Mg(2+) serves as cofactor. The cofactor is Mn(2+).

The protein localises to the plastid. The protein resides in the chloroplast. The enzyme catalyses (2E)-geranyl diphosphate = (1S,5S)-beta-pinene + diphosphate. It carries out the reaction (2E)-geranyl diphosphate = (1S,5S)-alpha-pinene + diphosphate. It functions in the pathway terpene metabolism; oleoresin biosynthesis. The protein operates within secondary metabolite biosynthesis; terpenoid biosynthesis. Functionally, monoterpene synthase (TPS) involved in the biosynthesis of monoterpene natural products included in conifer oleoresin secretions and volatile emissions; these compounds contribute to biotic and abiotic stress defense against herbivores and pathogens. Catalyzes the conversion of (2E)-geranyl diphosphate (GPP) to (-)-beta-pinene and, to a lower extent, to (-)-alpha-pinene. The sequence is that of (-)-beta-pinene synthase 2, chloroplastic from Pinus banksiana (Jack pine).